A 264-amino-acid polypeptide reads, in one-letter code: Regulator of cytoskeleton and endocytosis RVS161 (264 aa).

Residues 15 to 239 (ASVIVKDVDK…LDPASRDEYA (225 aa)) form the BAR domain.

It localises to the cytoplasm. Its subcellular location is the cytoskeleton. Functionally, component of a cytoskeletal structure that is required for the formation of endocytic vesicles at the plasma membrane level. Plays an important role in virulence. This Candida albicans (strain SC5314 / ATCC MYA-2876) (Yeast) protein is Regulator of cytoskeleton and endocytosis RVS161 (RVS161).